The chain runs to 192 residues: Flavin prenyltransferase UbiX (192 aa).

FMN-binding positions include Gly-10–Ser-12, Ser-36, Ser-92–Thr-95, and Arg-127. Tyr-157 and Lys-173 together coordinate dimethylallyl phosphate.

The protein belongs to the UbiX/PAD1 family.

It carries out the reaction dimethylallyl phosphate + FMNH2 = prenylated FMNH2 + phosphate. In terms of biological role, flavin prenyltransferase that catalyzes the synthesis of the prenylated FMN cofactor (prenyl-FMN) for 4-hydroxy-3-polyprenylbenzoic acid decarboxylase UbiD. The prenyltransferase is metal-independent and links a dimethylallyl moiety from dimethylallyl monophosphate (DMAP) to the flavin N5 and C6 atoms of FMN. In Chlamydia muridarum (strain MoPn / Nigg), this protein is Flavin prenyltransferase UbiX.